A 126-amino-acid chain; its full sequence is Histone H2B 7 (126 aa).

Positions 1–12 are enriched in low complexity; that stretch reads MPEPAKSAPAPK. The disordered stretch occupies residues 1–35; it reads MPEPAKSAPAPKKGSKKAVTKTQKKGDKKRKRARK. N6-acetyllysine is present on residues Lys6 and Lys13. A compositionally biased stretch (basic residues) spans 13–34; that stretch reads KGSKKAVTKTQKKGDKKRKRAR. At Ser15 the chain carries Phosphoserine. 2 positions are modified to N6-acetyllysine: Lys16 and Lys21. Ser113 is a glycosylation site (O-linked (GlcNAc) serine). Lys121 participates in a covalent cross-link: Glycyl lysine isopeptide (Lys-Gly) (interchain with G-Cter in ubiquitin).

Belongs to the histone H2B family. As to quaternary structure, the nucleosome is a histone octamer containing two molecules each of H2A, H2B, H3 and H4 assembled in one H3-H4 heterotetramer and two H2A-H2B heterodimers. The octamer wraps approximately 147 bp of DNA. In terms of processing, monoubiquitination of Lys-121 by the BRE1 gives a specific tag for epigenetic transcriptional activation and is also prerequisite for histone H3 'Lys-4' and 'Lys-79' methylation. Post-translationally, phosphorylated on Ser-15 during apoptosis; which facilitates apoptotic chromatin condensation. GlcNAcylation at Ser-113 promotes monoubiquitination of Lys-121. It fluctuates in response to extracellular glucose, and associates with transcribed genes.

The protein resides in the nucleus. It is found in the chromosome. Functionally, core component of nucleosome. Nucleosomes wrap and compact DNA into chromatin, limiting DNA accessibility to the cellular machineries which require DNA as a template. Histones thereby play a central role in transcription regulation, DNA repair, DNA replication and chromosomal stability. DNA accessibility is regulated via a complex set of post-translational modifications of histones, also called histone code, and nucleosome remodeling. This is Histone H2B 7 (H2B-VII) from Gallus gallus (Chicken).